The primary structure comprises 405 residues: Saccharopepsin (405 aa).

An N-terminal signal peptide occupies residues 1–22 (MFSLKALLPLALLLVSANQVAA). A propeptide spans 23-76 (KVHKAKIYKHELSDEMKEVTFEQHLAHLGQKYLTQFEKANPEVVFSREHPFFTE) (activation peptide). The 312-residue stretch at 91 to 402 (YYTDITLGTP…DLGNNAVGLA (312 aa)) folds into the Peptidase A1 domain. Asp109 is a catalytic residue. Cys122 and Cys127 are joined by a disulfide. The N-linked (GlcNAc...) asparagine glycan is linked to Asn144. Asp294 is an active-site residue. The cysteines at positions 328 and 361 are disulfide-linked. Residue Asn345 is glycosylated (N-linked (GlcNAc...) asparagine).

This sequence belongs to the peptidase A1 family.

The protein resides in the vacuole. It carries out the reaction Hydrolysis of proteins with broad specificity for peptide bonds. Cleaves -Leu-Leu-|-Val-Tyr- bond in a synthetic substrate. Does not act on esters of Tyr or Arg.. Aspartyl protease implicated in the post-translational regulation of S.cerevisiae vacuolar proteinases. Acts on YSCB, on YSCY and on itself. The protein is Saccharopepsin (PEP4) of Saccharomyces cerevisiae (strain ATCC 204508 / S288c) (Baker's yeast).